We begin with the raw amino-acid sequence, 534 residues long: Probable protein kinase UbiB (534 aa).

Residues 23 to 43 form a helical membrane-spanning segment; sequence DLLFALPLPWFLLAVRYVLPW. The region spanning 125–492 is the Protein kinase domain; it reads RFDVDPLASA…WKKRKDDWFL (368 aa). ATP contacts are provided by residues 131 to 139 and Lys153; that span reads LASASVAQV. Asp288 serves as the catalytic Proton acceptor. 2 consecutive transmembrane segments (helical) span residues 490–510 and 512–532; these read WFLR…AIGG and LNQL…YLIV.

It belongs to the ABC1 family. UbiB subfamily.

The protein localises to the cell inner membrane. Its pathway is cofactor biosynthesis; ubiquinone biosynthesis [regulation]. Its function is as follows. Is probably a protein kinase regulator of UbiI activity which is involved in aerobic coenzyme Q (ubiquinone) biosynthesis. In Pseudomonas fluorescens (strain SBW25), this protein is Probable protein kinase UbiB.